Reading from the N-terminus, the 296-residue chain is Probable lipid kinase YegS-like (296 aa).

In terms of domain architecture, DAGKc spans Met-1–His-130. ATP-binding positions include Thr-37, Gly-63–Glu-69, and Thr-92. 3 residues coordinate Mg(2+): Leu-212, Asp-215, and Leu-217. Glu-268 functions as the Proton acceptor in the catalytic mechanism.

This sequence belongs to the diacylglycerol/lipid kinase family. YegS lipid kinase subfamily. Mg(2+) is required as a cofactor. Requires Ca(2+) as cofactor.

It is found in the cytoplasm. Its function is as follows. Probably phosphorylates lipids; the in vivo substrate is unknown. The polypeptide is Probable lipid kinase YegS-like (Yersinia pseudotuberculosis serotype I (strain IP32953)).